A 358-amino-acid chain; its full sequence is Aromatic amino acid aminotransferase (358 aa).

Residue Lys214 is modified to N6-(pyridoxal phosphate)lysine.

The protein belongs to the class-II pyridoxal-phosphate-dependent aminotransferase family. As to quaternary structure, homodimer. Pyridoxal 5'-phosphate is required as a cofactor.

The catalysed reaction is an aromatic L-alpha-amino acid + 2-oxoglutarate = an aromatic oxo-acid + L-glutamate. In terms of biological role, aminotransferase that catalyzes the conversion of aromatic amino acids and 2-oxoglutarate into corresponding aromatic oxo acids and L-glutamate. The sequence is that of Aromatic amino acid aminotransferase from Rhodococcus jostii (strain RHA1).